The following is a 71-amino-acid chain: Sec-independent protein translocase protein TatA (71 aa).

The helical transmembrane segment at 1–21 (MGSFSLLHWLVVLVIVLLVFG) threads the bilayer. Positions 43–71 (LHEDDKPTDQLGSTSQSTASGPQQDHGKH) are disordered. Residues 52–65 (QLGSTSQSTASGPQ) are compositionally biased toward polar residues.

The protein belongs to the TatA/E family. The Tat system comprises two distinct complexes: a TatABC complex, containing multiple copies of TatA, TatB and TatC subunits, and a separate TatA complex, containing only TatA subunits. Substrates initially bind to the TatABC complex, which probably triggers association of the separate TatA complex to form the active translocon.

It localises to the cell inner membrane. In terms of biological role, part of the twin-arginine translocation (Tat) system that transports large folded proteins containing a characteristic twin-arginine motif in their signal peptide across membranes. TatA could form the protein-conducting channel of the Tat system. In Xylella fastidiosa (strain M12), this protein is Sec-independent protein translocase protein TatA.